Here is a 463-residue protein sequence, read N- to C-terminus: Glutamate--tRNA ligase 1 (463 aa).

The short motif at 10–20 is the 'HIGH' region element; sequence PSPTGFLHIGS. A 'KMSKS' region motif is present at residues 239–243; sequence KLSKR. ATP is bound at residue K242.

The protein belongs to the class-I aminoacyl-tRNA synthetase family. Glutamate--tRNA ligase type 1 subfamily. As to quaternary structure, monomer.

It localises to the cytoplasm. It catalyses the reaction tRNA(Glu) + L-glutamate + ATP = L-glutamyl-tRNA(Glu) + AMP + diphosphate. In terms of biological role, catalyzes the attachment of glutamate to tRNA(Glu) in a two-step reaction: glutamate is first activated by ATP to form Glu-AMP and then transferred to the acceptor end of tRNA(Glu). This Rickettsia canadensis (strain McKiel) protein is Glutamate--tRNA ligase 1.